The primary structure comprises 271 residues: 3-deoxy-manno-octulosonate cytidylyltransferase (271 aa).

Belongs to the KdsB family.

It localises to the cytoplasm. The catalysed reaction is 3-deoxy-alpha-D-manno-oct-2-ulosonate + CTP = CMP-3-deoxy-beta-D-manno-octulosonate + diphosphate. It participates in nucleotide-sugar biosynthesis; CMP-3-deoxy-D-manno-octulosonate biosynthesis; CMP-3-deoxy-D-manno-octulosonate from 3-deoxy-D-manno-octulosonate and CTP: step 1/1. The protein operates within bacterial outer membrane biogenesis; lipopolysaccharide biosynthesis. Activates KDO (a required 8-carbon sugar) for incorporation into bacterial lipopolysaccharide in Gram-negative bacteria. This Leptothrix cholodnii (strain ATCC 51168 / LMG 8142 / SP-6) (Leptothrix discophora (strain SP-6)) protein is 3-deoxy-manno-octulosonate cytidylyltransferase.